The following is a 123-amino-acid chain: Large ribosomal subunit protein bL12 (123 aa).

The protein belongs to the bacterial ribosomal protein bL12 family. Homodimer. Part of the ribosomal stalk of the 50S ribosomal subunit. Forms a multimeric L10(L12)X complex, where L10 forms an elongated spine to which 2 to 4 L12 dimers bind in a sequential fashion. Binds GTP-bound translation factors.

Its function is as follows. Forms part of the ribosomal stalk which helps the ribosome interact with GTP-bound translation factors. Is thus essential for accurate translation. This Haemophilus influenzae (strain 86-028NP) protein is Large ribosomal subunit protein bL12.